Consider the following 205-residue polypeptide: Holliday junction branch migration complex subunit RuvA (205 aa).

The tract at residues 1 to 64 is domain I; that stretch reads MIGRLRGIIL…EDAQLLFGFN (64 aa). Residues 65–143 form a domain II region; sequence DKQERALFRE…GLSGDLFNSV (79 aa). Residues 144–156 form a flexible linker region; it reads SDIPLTSPANVDN. Residues 157–205 are domain III; that stretch reads RVGEPEAEAAAALVALGYKPQEASRMISKIARPDADCETLIRDALRAAL.

This sequence belongs to the RuvA family. In terms of assembly, homotetramer. Forms an RuvA(8)-RuvB(12)-Holliday junction (HJ) complex. HJ DNA is sandwiched between 2 RuvA tetramers; dsDNA enters through RuvA and exits via RuvB. An RuvB hexamer assembles on each DNA strand where it exits the tetramer. Each RuvB hexamer is contacted by two RuvA subunits (via domain III) on 2 adjacent RuvB subunits; this complex drives branch migration. In the full resolvosome a probable DNA-RuvA(4)-RuvB(12)-RuvC(2) complex forms which resolves the HJ.

The protein localises to the cytoplasm. Functionally, the RuvA-RuvB-RuvC complex processes Holliday junction (HJ) DNA during genetic recombination and DNA repair, while the RuvA-RuvB complex plays an important role in the rescue of blocked DNA replication forks via replication fork reversal (RFR). RuvA specifically binds to HJ cruciform DNA, conferring on it an open structure. The RuvB hexamer acts as an ATP-dependent pump, pulling dsDNA into and through the RuvAB complex. HJ branch migration allows RuvC to scan DNA until it finds its consensus sequence, where it cleaves and resolves the cruciform DNA. This chain is Holliday junction branch migration complex subunit RuvA, found in Pectobacterium atrosepticum (strain SCRI 1043 / ATCC BAA-672) (Erwinia carotovora subsp. atroseptica).